A 923-amino-acid chain; its full sequence is Dynein axonemal intermediate chain 3 (923 aa).

Residues 1-35 form a disordered region; it reads MAPKPPKSPKGQKKGKKNMKQQLLVPEEEEPMNME. The segment covering 10-19 has biased composition (basic residues); that stretch reads KGQKKGKKNM. 4 WD repeats span residues 398–438, 480–536, 702–741, and 745–785; these read ESPD…DRIE, GHRK…PAVT, VHDGAVHTIQRSPFFNDIVLTVGGWNVAIWKEEVMTGPLL, and CGPK…HEPA. The stretch at 869–889 forms a coiled coil; it reads LELVKKKAKIYQKTKEQMEAE.

Interacts with ACTR2; this interaction reduces binding of the Arp2/3 complex to the VCA domain of nucleation promoting factors. Part of the multisubunit axonemal dynein complex formed at least of two heavy chains and a number of intermediate and light chains. Found in a associated with the catalytic heavy chain DNAH2, the intermediate chain DNAI4, and the light chain DYNLT1. In terms of tissue distribution, strongly expressed in the testes. Detected also in brain and lung tissues.

It is found in the cytoplasm. Its function is as follows. Acts as a negative regulator of cell migration, invasion, and metastasis downstream of p53/TP53, through inhibition of Arp2/3 complex-mediated actin polymerization. Via its association with the multisubunit axonemal dynein complex, is potentially involved in the regulation of cilia function. May play a role in osteogenesis of dental tissue-derived mesenchymal stem cells. The sequence is that of Dynein axonemal intermediate chain 3 (Dnai3) from Mus musculus (Mouse).